The sequence spans 751 residues: Conserved oligomeric Golgi complex subunit 5 (751 aa).

Disordered regions lie at residues 1-21 (MVTGDPVATKTPNAADSDDND) and 244-263 (SPTHNVSKPAPSRGPGKTPQ).

Belongs to the COG5 family. In terms of assembly, component of the conserved oligomeric Golgi complex which is composed of eight different subunits and is required for normal Golgi morphology and localization.

The protein localises to the golgi apparatus membrane. Required for normal Golgi function and necessary during spermatogenesis. Required for cleavage furrow ingression during cytokinesis in dividing spermatocytes and for the extensive polarized cell growth that accompanies spermatid elongation. The protein is Conserved oligomeric Golgi complex subunit 5 (fws) of Drosophila melanogaster (Fruit fly).